A 180-amino-acid chain; its full sequence is NAD(P)H-quinone oxidoreductase subunit 6, chloroplastic (180 aa).

A run of 5 helical transmembrane segments spans residues 10–30, 32–52, 57–77, 102–122, and 153–173; these read LLLAPLTLSLIFGGIGVVLLT, IIYSALSLGLVLICISFFYII, FVAVAQILIYIGAVNILILFA, IVCTSLFCSLITIILNISWFG, and FLPFELISIILLVALIGAITI.

It belongs to the complex I subunit 6 family. In terms of assembly, NDH is composed of at least 16 different subunits, 5 of which are encoded in the nucleus.

Its subcellular location is the plastid. The protein localises to the chloroplast thylakoid membrane. It carries out the reaction a plastoquinone + NADH + (n+1) H(+)(in) = a plastoquinol + NAD(+) + n H(+)(out). The enzyme catalyses a plastoquinone + NADPH + (n+1) H(+)(in) = a plastoquinol + NADP(+) + n H(+)(out). NDH shuttles electrons from NAD(P)H:plastoquinone, via FMN and iron-sulfur (Fe-S) centers, to quinones in the photosynthetic chain and possibly in a chloroplast respiratory chain. The immediate electron acceptor for the enzyme in this species is believed to be plastoquinone. Couples the redox reaction to proton translocation, and thus conserves the redox energy in a proton gradient. This Cryptomeria japonica (Japanese cedar) protein is NAD(P)H-quinone oxidoreductase subunit 6, chloroplastic (ndhG).